The following is a 417-amino-acid chain: Probable lysophospholipase BODYGUARD 4 (417 aa).

The first 49 residues, 1–49, serve as a signal peptide directing secretion; sequence MSFPRKFGTAIHAALSFIVFFFLDLLDAILCVVYEFVDEILEENSTGCY. A lipid anchor (N-palmitoyl cysteine) is attached at cysteine 50. An AB hydrolase-1 domain is found at 150–259; that stretch reads VIFIHGFMGS…PPYFPSSVEG (110 aa). Histidine 154 is an active-site residue. Serine 225 functions as the Nucleophile in the catalytic mechanism. Active-site charge relay system residues include aspartate 367 and histidine 395.

In terms of tissue distribution, expressed in epidermal cells.

The protein localises to the cell membrane. Its subcellular location is the secreted. It is found in the cell wall. Involved in cuticle development and morphogenesis. This Arabidopsis thaliana (Mouse-ear cress) protein is Probable lysophospholipase BODYGUARD 4.